A 205-amino-acid polypeptide reads, in one-letter code: MATPLGWSKAGSGSVCLALDQLRDVIESQEELIHQLRNVMVLQDENFVSKEEFQAVEKKLVEEKAAHAKTKVLLAKEEEKLQFALGEVEVLSKQLEKEKLAFEKALSSVKSKVLQESSKKDQLITKCNEIESHIIKQEDILNGKENEIKELQQVISQQKQIFRNHMSDFRIQKQQESYMAQVLDQKHKKASGTRQARSHQHPREK.

Residues 17-166 (LALDQLRDVI…QQKQIFRNHM (150 aa)) adopt a coiled-coil conformation. The required for interaction with CBX5 and TBPL1 stretch occupies residues 138 to 185 (EDILNGKENEIKELQQVISQQKQIFRNHMSDFRIQKQQESYMAQVLDQ). The tract at residues 180–205 (AQVLDQKHKKASGTRQARSHQHPREK) is disordered. The span at 186 to 205 (KHKKASGTRQARSHQHPREK) shows a compositional bias: basic residues.

Belongs to the SPATA24 family. As to quaternary structure, homodimer. Interacts with CBX3, CBX5, GMNN, GTF2B, TBPL1 and the polycomb proteins PHCF2, RNF2 and SCMH1 but not with CBX1 or PCGF2.

It localises to the cytoplasm. The protein localises to the nucleus. The protein resides in the nucleolus. It is found in the nucleoplasm. Binds DNA with high affinity but does not bind to TATA boxes. Synergises with GMNN and TBP in activation of TATA box-containing promoters and with GMNN and TBPL1 in activation of the NF1 TATA-less promoter. May play a role in cytoplasm movement and removal during spermiogenesis. The chain is Spermatogenesis-associated protein 24 (SPATA24) from Homo sapiens (Human).